The sequence spans 298 residues: MAAAEPAVLALPNSGAGGAGAPSGTVPVLFCFSVFARPSSVPHGAGYELLIQKFLSLYGDQIDMHRKFVVQLFAEEWGQYVDLPKGFAVSERCKVRLVPLQIQLTTLGNLTPSSTVFFCCDMQERFRPAIKYFGDIISVGQRLLQGARILGIPVIVTEQYPKGLGSTVQEIDLTGVKLVLPKTKFSMVLPEVEAALAEIPGVRSVVLFGVETHVCIQQTALELVGRGVEVHIVADATSSRSMMDRMFALERLARTGIIVTTSEAVLLQLVADKDHPKFKEIQNLIKASAPESGLLSKV.

Tyr160 carries the post-translational modification Phosphotyrosine. Lys279 bears the N6-succinyllysine mark.

It belongs to the isochorismatase family.

This Homo sapiens (Human) protein is Isochorismatase domain-containing protein 1 (ISOC1).